A 367-amino-acid polypeptide reads, in one-letter code: Mitogen-activated protein kinase 12 (367 aa).

Residues 27–311 (YRDLQPVGSG…AGEALAHPYF (285 aa)) enclose the Protein kinase domain. ATP-binding positions include 33 to 41 (VGSGAYGAV) and Lys-56. Catalysis depends on Asp-153, which acts as the Proton acceptor. Residue Thr-183 is modified to Phosphothreonine; by MAP2K3 and MAP2K6. Positions 183-185 (TGY) match the TXY motif. A Phosphotyrosine modification is found at Tyr-185.

Belongs to the protein kinase superfamily. CMGC Ser/Thr protein kinase family. MAP kinase subfamily. As to quaternary structure, monomer. Interacts with the PDZ domain of the syntrophin SNTA1. Interacts with SH3BP5. Interacts with LIN7C, SCRIB and SYNJ2BP. Interacts with PTPN4; this interaction induces the activation of PTPN4 phosphatase activity. Mg(2+) serves as cofactor. Dually phosphorylated on Thr-183 and Tyr-185 by MAP2K3/MKK3 and MAP2K6/MKK6, which activates the enzyme. Post-translationally, ubiquitinated. Ubiquitination leads to degradation by the proteasome pathway. In terms of tissue distribution, highly expressed in skeletal muscle and heart.

The protein resides in the cytoplasm. It is found in the nucleus. The protein localises to the mitochondrion. The enzyme catalyses L-seryl-[protein] + ATP = O-phospho-L-seryl-[protein] + ADP + H(+). The catalysed reaction is L-threonyl-[protein] + ATP = O-phospho-L-threonyl-[protein] + ADP + H(+). Its activity is regulated as follows. Activated by phosphorylation on threonine and tyrosine. MAP2K3/MKK3 and MAP2K6/MKK6 are both essential for the activation of MAPK12 induced by environmental stress, whereas MAP2K6/MKK6 is the major MAPK12 activator in response to TNF-alpha. Functionally, serine/threonine kinase which acts as an essential component of the MAP kinase signal transduction pathway. MAPK12 is one of the four p38 MAPKs which play an important role in the cascades of cellular responses evoked by extracellular stimuli such as pro-inflammatory cytokines or physical stress leading to direct activation of transcription factors such as ELK1 and ATF2. Accordingly, p38 MAPKs phosphorylate a broad range of proteins and it has been estimated that they may have approximately 200 to 300 substrates each. Some of the targets are downstream kinases such as MAPKAPK2, which are activated through phosphorylation and further phosphorylate additional targets. Plays a role in myoblast differentiation and also in the down-regulation of cyclin D1 in response to hypoxia in adrenal cells suggesting MAPK12 may inhibit cell proliferation while promoting differentiation. Phosphorylates DLG1. Following osmotic shock, MAPK12 in the cell nucleus increases its association with nuclear DLG1, thereby causing dissociation of DLG1-SFPQ complexes. This function is independent of its catalytic activity and could affect mRNA processing and/or gene transcription to aid cell adaptation to osmolarity changes in the environment. Regulates UV-induced checkpoint signaling and repair of UV-induced DNA damage and G2 arrest after gamma-radiation exposure. MAPK12 is involved in the regulation of SLC2A1 expression and basal glucose uptake in L6 myotubes; and negatively regulates SLC2A4 expression and contraction-mediated glucose uptake in adult skeletal muscle. C-Jun (JUN) phosphorylation is stimulated by MAPK14 and inhibited by MAPK12, leading to a distinct AP-1 regulation. MAPK12 is required for the normal kinetochore localization of PLK1, prevents chromosomal instability and supports mitotic cell viability. MAPK12-signaling is also positively regulating the expansion of transient amplifying myogenic precursor cells during muscle growth and regeneration. The protein is Mitogen-activated protein kinase 12 (MAPK12) of Homo sapiens (Human).